Here is a 309-residue protein sequence, read N- to C-terminus: Porphobilinogen deaminase (309 aa).

C241 is subject to S-(dipyrrolylmethanemethyl)cysteine.

Belongs to the HMBS family. In terms of assembly, monomer. The cofactor is dipyrromethane.

It catalyses the reaction 4 porphobilinogen + H2O = hydroxymethylbilane + 4 NH4(+). It participates in porphyrin-containing compound metabolism; protoporphyrin-IX biosynthesis; coproporphyrinogen-III from 5-aminolevulinate: step 2/4. In terms of biological role, tetrapolymerization of the monopyrrole PBG into the hydroxymethylbilane pre-uroporphyrinogen in several discrete steps. The polypeptide is Porphobilinogen deaminase (Desulforamulus reducens (strain ATCC BAA-1160 / DSM 100696 / MI-1) (Desulfotomaculum reducens)).